The primary structure comprises 155 residues: Putative pre-16S rRNA nuclease (155 aa).

Belongs to the YqgF nuclease family.

The protein localises to the cytoplasm. Functionally, could be a nuclease involved in processing of the 5'-end of pre-16S rRNA. The chain is Putative pre-16S rRNA nuclease from Xylella fastidiosa (strain M23).